The following is a 345-amino-acid chain: Protein RecA (345 aa).

Gly68–Thr75 lines the ATP pocket.

Belongs to the RecA family.

Its subcellular location is the cytoplasm. Functionally, can catalyze the hydrolysis of ATP in the presence of single-stranded DNA, the ATP-dependent uptake of single-stranded DNA by duplex DNA, and the ATP-dependent hybridization of homologous single-stranded DNAs. It interacts with LexA causing its activation and leading to its autocatalytic cleavage. The chain is Protein RecA from Aquifex aeolicus (strain VF5).